A 117-amino-acid chain; its full sequence is Putative pterin-4-alpha-carbinolamine dehydratase (117 aa).

This sequence belongs to the pterin-4-alpha-carbinolamine dehydratase family.

The enzyme catalyses (4aS,6R)-4a-hydroxy-L-erythro-5,6,7,8-tetrahydrobiopterin = (6R)-L-erythro-6,7-dihydrobiopterin + H2O. This chain is Putative pterin-4-alpha-carbinolamine dehydratase, found in Aeromonas salmonicida (strain A449).